A 326-amino-acid chain; its full sequence is Glyoxylate/hydroxypyruvate reductase B (326 aa).

Active-site residues include R237 and E266. The Proton donor role is filled by H285.

It belongs to the D-isomer specific 2-hydroxyacid dehydrogenase family. GhrB subfamily. In terms of assembly, homodimer.

Its subcellular location is the cytoplasm. The enzyme catalyses glycolate + NADP(+) = glyoxylate + NADPH + H(+). It catalyses the reaction (R)-glycerate + NAD(+) = 3-hydroxypyruvate + NADH + H(+). The catalysed reaction is (R)-glycerate + NADP(+) = 3-hydroxypyruvate + NADPH + H(+). Catalyzes the NADPH-dependent reduction of glyoxylate and hydroxypyruvate into glycolate and glycerate, respectively. This is Glyoxylate/hydroxypyruvate reductase B from Yersinia pestis bv. Antiqua (strain Nepal516).